Consider the following 376-residue polypeptide: 23S rRNA (uracil(747)-C(5))-methyltransferase RlmC (376 aa).

Positions 3, 11, 14, and 87 each coordinate [4Fe-4S] cluster. The S-adenosyl-L-methionine site is built by glutamine 212, phenylalanine 241, glutamate 262, and asparagine 307. Residue cysteine 334 is the Nucleophile of the active site.

The protein belongs to the class I-like SAM-binding methyltransferase superfamily. RNA M5U methyltransferase family. RlmC subfamily.

It carries out the reaction uridine(747) in 23S rRNA + S-adenosyl-L-methionine = 5-methyluridine(747) in 23S rRNA + S-adenosyl-L-homocysteine + H(+). Functionally, catalyzes the formation of 5-methyl-uridine at position 747 (m5U747) in 23S rRNA. This is 23S rRNA (uracil(747)-C(5))-methyltransferase RlmC from Pectobacterium carotovorum subsp. carotovorum (strain PC1).